The chain runs to 119 residues: Ribonuclease P protein component (119 aa).

It belongs to the RnpA family. In terms of assembly, consists of a catalytic RNA component (M1 or rnpB) and a protein subunit.

The catalysed reaction is Endonucleolytic cleavage of RNA, removing 5'-extranucleotides from tRNA precursor.. Functionally, RNaseP catalyzes the removal of the 5'-leader sequence from pre-tRNA to produce the mature 5'-terminus. It can also cleave other RNA substrates such as 4.5S RNA. The protein component plays an auxiliary but essential role in vivo by binding to the 5'-leader sequence and broadening the substrate specificity of the ribozyme. In Bacillus cereus (strain ATCC 14579 / DSM 31 / CCUG 7414 / JCM 2152 / NBRC 15305 / NCIMB 9373 / NCTC 2599 / NRRL B-3711), this protein is Ribonuclease P protein component.